Consider the following 255-residue polypeptide: Methionine aminopeptidase (255 aa).

Position 76 (H76) interacts with substrate. Residues D93, D104, and H167 each contribute to the a divalent metal cation site. H174 is a binding site for substrate. A divalent metal cation is bound by residues E201 and E232.

The protein belongs to the peptidase M24A family. Methionine aminopeptidase type 1 subfamily. As to quaternary structure, monomer. It depends on Co(2+) as a cofactor. Zn(2+) serves as cofactor. The cofactor is Mn(2+). Fe(2+) is required as a cofactor.

The enzyme catalyses Release of N-terminal amino acids, preferentially methionine, from peptides and arylamides.. Its function is as follows. Removes the N-terminal methionine from nascent proteins. The N-terminal methionine is often cleaved when the second residue in the primary sequence is small and uncharged (Met-Ala-, Cys, Gly, Pro, Ser, Thr, or Val). Requires deformylation of the N(alpha)-formylated initiator methionine before it can be hydrolyzed. The protein is Methionine aminopeptidase of Treponema pallidum (strain Nichols).